Reading from the N-terminus, the 276-residue chain is MATFTTADVKRLRELTAAGMMDCKKALEEADGDFDKAVELLRIKGAKDVGKRAERTTANGLVAAATDDGVGVLVEVKCETDFVAKGERFQELGRRIVQAALTTETDDPAVLLDAVVDGRSVRDLVEENSAALGEKIELGRLARFAGAAVVSYLHKTSPDLPPQLGVLVELSAPNAEAGKDIAQHIAAFAPRYLTRADVPEDVVAAERRIAEATAREEGKPEQALPKIVEGRVTGFFKETVLTEQAFAKDPKKTVQQVLDDAGVRVVRFARFRIGQL.

The segment at 80–83 (TDFV) is involved in Mg(2+) ion dislocation from EF-Tu.

It belongs to the EF-Ts family.

The protein resides in the cytoplasm. Functionally, associates with the EF-Tu.GDP complex and induces the exchange of GDP to GTP. It remains bound to the aminoacyl-tRNA.EF-Tu.GTP complex up to the GTP hydrolysis stage on the ribosome. This is Elongation factor Ts from Acidothermus cellulolyticus (strain ATCC 43068 / DSM 8971 / 11B).